The sequence spans 453 residues: Vitamin D3 receptor A (453 aa).

Positions 53–128 (PRICGVCGDK…IGMMKEFILT (76 aa)) form a DNA-binding region, nuclear receptor. Residues Cys56, Cys59, Cys73, Cys76, Cys92, Cys98, Cys108, and Cys111 each contribute to the Zn(2+) site. 2 consecutive NR C4-type zinc fingers follow at residues 56 to 76 (CGVC…CEGC) and 92 to 111 (CPFN…CQAC). The tract at residues 129 to 158 (DEEVQRKKDLIMKRKEEEAAREARKPRLSD) is hinge. The region spanning 159-449 (EQMQIINSLV…LTPLVLEVFG (291 aa)) is the NR LBD domain. Residues Tyr175 and Ser265 each contribute to the calcitriol site. Residues 274 to 292 (KMIPGFRDLTAEDQIALLK) are interaction with coactivator LXXLL motif. The calcitriol site is built by Arg302, Ser306, His333, and His423. A 9aaTAD motif is present at residues 442 to 450 (PLVLEVFGS).

The protein belongs to the nuclear hormone receptor family. NR1 subfamily. As to quaternary structure, homodimer in the absence of bound vitamin D3. Heterodimer with RXRA after vitamin D3 binding. Interacts with ncoa1 and possibly other coactivators, leading to a strong increase of transcription of target genes. In terms of tissue distribution, detected in embryo 24 to 48 hours after fertilization and in gastrula.

The protein resides in the nucleus. It is found in the cytoplasm. In terms of biological role, nuclear receptor for calcitriol, the active form of vitamin D3 which mediates the action of this vitamin on cells. Enters the nucleus upon vitamin D3 binding where it forms heterodimers with the retinoid X receptor/RXR. The VDR-RXR heterodimers bind to specific response elements on DNA and activate the transcription of vitamin D3-responsive target genes. Recruited to promoters via its interaction with BAZ1B/WSTF which mediates the interaction with acetylated histones, an essential step for VDR-promoter association. Plays a central role in calcium homeostasis. This Danio rerio (Zebrafish) protein is Vitamin D3 receptor A (vdra).